Reading from the N-terminus, the 305-residue chain is Divergent heme oxygenase-like protein (305 aa).

The N-terminal stretch at 1 to 18 (MIRKIIILMFTFFSNIHN) is a signal peptide. The tract at residues 1–83 (MIRKIIILMF…GVDKNNINYN (83 aa)) is sufficient for apicoplast targeting. N-linked (GlcNAc...) asparagine glycans are attached at residues Asn132, Asn159, and Asn288.

In terms of processing, proteolytically cleaved; targeted by its N-terminal leader sequence for import into the apicoplast where it undergoes proteolytic processing, resulting in an N-terminus starting at or near Gly-33 in the mature protein.

It localises to the plastid. Its subcellular location is the apicoplast. Its function is as follows. Essential for blood-stage parasite viability. Required for apicoplast biogenesis. Associates with the apicoplast genome and mediates apicoplast gene expression. Can bind heme. Can bind protoporphyrin IX. This is Divergent heme oxygenase-like protein from Plasmodium falciparum (isolate 3D7).